The following is a 244-amino-acid chain: Serine-rich single-pass membrane protein 1 (244 aa).

Residues 35 to 55 form a helical membrane-spanning segment; it reads CGTIGNFLLWYFVIVFVLMFF. Disordered regions lie at residues 65-112, 132-191, and 213-244; these read DKKD…LTPV, QSQF…LGSY, and HSQQ…FSKF. The span at 80–94 shows a compositional bias: basic and acidic residues; it reads ASKETSYKWQSKDGA. Polar residues-rich tracts occupy residues 97-112 and 132-142; these read PSQT…LTPV and QSQFNEVNQNQ. Residues 161–176 show a composition bias toward basic and acidic residues; that stretch reads SWKESESEHHPSPDSI. Residues 231 to 244 show a composition bias toward polar residues; the sequence is ESSISDINTKFSKF.

It localises to the membrane. The polypeptide is Serine-rich single-pass membrane protein 1 (SSMEM1) (Macaca fascicularis (Crab-eating macaque)).